A 166-amino-acid polypeptide reads, in one-letter code: MEMSNAQRLILSNQYNLMSQLDPSNAAKYKRLQTIVERGYELQMRELNKDFGCITETECREIIDIMEMYHAMQESNKMLDDEERGKVDQRRLQFLGFDIATEAQQVHYVRFLVDSEGLYPQFDKADHHFNSQMPMLDKYRRMLKTWRNCPRQYHLCANELAQIFSA.

Belongs to the UPF0304 family.

This Vibrio campbellii (strain ATCC BAA-1116) protein is UPF0304 protein VIBHAR_01542.